A 617-amino-acid chain; its full sequence is Probable Xaa-Pro aminopeptidase P (617 aa).

Residues Asp414, Asp425, Glu523, and Glu537 each contribute to the Mn(2+) site.

The protein belongs to the peptidase M24B family. Mn(2+) serves as cofactor.

The enzyme catalyses Release of any N-terminal amino acid, including proline, that is linked to proline, even from a dipeptide or tripeptide.. Catalyzes the removal of a penultimate prolyl residue from the N-termini of peptides. The chain is Probable Xaa-Pro aminopeptidase P (AMPP) from Colletotrichum graminicola (strain M1.001 / M2 / FGSC 10212) (Maize anthracnose fungus).